We begin with the raw amino-acid sequence, 172 residues long: uncharacterized protein (172 aa).

The N-terminal stretch at 1-29 (MKKKQVMLALTAAAGLGLTALHSAPAAKA) is a signal peptide. SH3b domains follow at residues 42-105 (SDTY…MKTA) and 112-172 (KQTA…LQMR).

This is an uncharacterized protein from Bacillus subtilis (strain 168).